Here is a 531-residue protein sequence, read N- to C-terminus: Transporter mfs1 (531 aa).

10 consecutive transmembrane segments (helical) span residues 83 to 103 (LVVTFDVCFLTFAVYMGSAIF), 119 to 139 (VPVILGLTLFVEGYAVGPLIF), 158 to 178 (LIVFICLQIPTALGSSLGVLL), 182 to 202 (FLAGVFGSPALSTGGASLADI), 214 to 234 (FWSLGAVGGPVLGPLLGAAMV), 241 to 261 (WQFWLLMMISALVLVIITFFM), 325 to 345 (IYIGLVYSILYLWFEAFPILF), 358 to 378 (LVYMGILVGSVLTVAFYFIYL), 398 to 418 (ILIISFPAAFFIPISLFWFGW), and 424 to 444 (VHWIVPIVGTLFYASGSFLLF). N-linked (GlcNAc...) asparagine glycosylation is present at Asn486. The chain crosses the membrane as a helical span at residues 496–516 (GWGSTILGVISCIMIPIPFLI).

It belongs to the major facilitator superfamily. CAR1 family.

It localises to the endoplasmic reticulum. The protein resides in the membrane. The polypeptide is Transporter mfs1 (mfs1) (Schizosaccharomyces pombe (strain 972 / ATCC 24843) (Fission yeast)).